Here is a 164-residue protein sequence, read N- to C-terminus: Zinc finger protein ZAT8 (164 aa).

2 C2H2-type zinc fingers span residues 37–59 (FRCKTCLKEFSSFQALGGHRASH) and 85–107 (HPCPICGVEFPMGQALGGHMRRH).

Its subcellular location is the nucleus. Functionally, probable transcription factor that may be involved in stress responses. This is Zinc finger protein ZAT8 (ZAT8) from Arabidopsis thaliana (Mouse-ear cress).